A 292-amino-acid polypeptide reads, in one-letter code: Elongation factor Ts (292 aa).

The interval 80–83 (TDFV) is involved in Mg(2+) ion dislocation from EF-Tu.

It belongs to the EF-Ts family.

The protein localises to the cytoplasm. Functionally, associates with the EF-Tu.GDP complex and induces the exchange of GDP to GTP. It remains bound to the aminoacyl-tRNA.EF-Tu.GTP complex up to the GTP hydrolysis stage on the ribosome. The sequence is that of Elongation factor Ts from Limosilactobacillus fermentum (strain NBRC 3956 / LMG 18251) (Lactobacillus fermentum).